The following is a 160-amino-acid chain: tRNA (cytidine(56)-2'-O)-methyltransferase (160 aa).

S-adenosyl-L-methionine-binding positions include Leu68, 94–98 (GAEKV), and 112–119 (IGNQPHSE).

This sequence belongs to the aTrm56 family. In terms of assembly, homodimer.

It is found in the cytoplasm. It carries out the reaction cytidine(56) in tRNA + S-adenosyl-L-methionine = 2'-O-methylcytidine(56) in tRNA + S-adenosyl-L-homocysteine + H(+). Functionally, specifically catalyzes the AdoMet-dependent 2'-O-ribose methylation of cytidine at position 56 in tRNAs. The chain is tRNA (cytidine(56)-2'-O)-methyltransferase from Saccharolobus solfataricus (strain ATCC 35092 / DSM 1617 / JCM 11322 / P2) (Sulfolobus solfataricus).